We begin with the raw amino-acid sequence, 374 residues long: Resuscitation-promoting factor Rpf2 (374 aa).

Residues 1–40 (MAPHQKSRINRINSTRSVPLRLATGGVLATLLIGGVTAAA) form the signal peptide. A G5 domain is found at 210–290 (IDRVDNTEIT…PATISRGTKT (81 aa)). The disordered stretch occupies residues 228–252 (PTYVDDPEAPAGDETVVEEGAPGTK).

Belongs to the transglycosylase family. Rpf subfamily. In terms of processing, glycosylated; by Pmt, by at least mannose and galactose. Other unidentified sugars may also be present. Post-translationally, may be subject to proteolytic cleavage as multiple shorter forms are detected in gels. At least 3 non-glycosylated protein isoforms of 35, 40 and 42 kDa are seen in gels.

It localises to the secreted. It is found in the cell surface. Its function is as follows. Factor that stimulates resuscitation of dormant cells. Has peptidoglycan (PG) hydrolytic activity. Active in the pM concentration range. Has little to no effect on actively-growing cells. PG fragments could either directly activate the resuscitation pathway of dormant bacteria or serve as a substrate for endogenous Rpf, resulting in low molecular weight products with resuscitation activity. This Corynebacterium glutamicum (strain ATCC 13032 / DSM 20300 / JCM 1318 / BCRC 11384 / CCUG 27702 / LMG 3730 / NBRC 12168 / NCIMB 10025 / NRRL B-2784 / 534) protein is Resuscitation-promoting factor Rpf2 (rpf2).